The following is a 465-amino-acid chain: MAP kinase-interacting serine/threonine-protein kinase 1 (465 aa).

Over residues 1–11 (MVSSQKLEKPI) the composition is skewed to basic and acidic residues. The disordered stretch occupies residues 1–40 (MVSSQKLEKPIEMGSSEPLPIADGDRRRKKKRRGRATDSL). At serine 39 the chain carries Phosphoserine. The Protein kinase domain occupies 49–374 (KLTSELLGEG…AAQVLQHPWV (326 aa)). Residues 55–63 (LGEGAYAKV) and lysine 78 contribute to the ATP site. Residues 185–203 (APTSLGSSDPPTSASQVAG) show a composition bias toward polar residues. A disordered region spans residues 185 to 204 (APTSLGSSDPPTSASQVAGT). Aspartate 211 acts as the Proton acceptor in catalysis. Phosphoserine is present on residues serine 221 and serine 226. Threonine 250, threonine 255, and threonine 385 each carry phosphothreonine. Residues 446-465 (RRRALAQAGRGEDRSPPTAL) are disordered. Positions 455-465 (RGEDRSPPTAL) are enriched in basic and acidic residues. Position 460 is a phosphoserine (serine 460).

It belongs to the protein kinase superfamily. CAMK Ser/Thr protein kinase family. In terms of assembly, interacts with the C-terminal regions of EIF4G1 and EIF4G2. Also binds to dephosphorylated ERK1 and ERK2, and to the p38 kinases. The cofactor is Mg(2+). Dual phosphorylation of Thr-250 and Thr-255 activates the kinase. Phosphorylation of Thr-385 activates the kinase. MAPK3/ERK1 is one of the kinases which activate MKNK1/MNK1. Phosphorylation by PAK2 leads to a reduced phosphorylation of EIF4G1. In terms of tissue distribution, ubiquitous.

The protein localises to the cytoplasm. The protein resides in the nucleus. The catalysed reaction is L-seryl-[protein] + ATP = O-phospho-L-seryl-[protein] + ADP + H(+). It catalyses the reaction L-threonyl-[protein] + ATP = O-phospho-L-threonyl-[protein] + ADP + H(+). With respect to regulation, phosphorylated and activated by the p38 kinases and kinases in the Erk pathway. In terms of biological role, may play a role in the response to environmental stress and cytokines. Appears to regulate translation by phosphorylating EIF4E, thus increasing the affinity of this protein for the 7-methylguanosine-containing mRNA cap. The polypeptide is MAP kinase-interacting serine/threonine-protein kinase 1 (MKNK1) (Homo sapiens (Human)).